A 176-amino-acid chain; its full sequence is Ribosome rescue factor SmrB (176 aa).

Residues 93 to 168 (LDLHGYRQSE…GDAALLVLID (76 aa)) enclose the Smr domain.

Belongs to the SmrB family. In terms of assembly, associates with collided ribosomes, but not with correctly translating polysomes.

Acts as a ribosome collision sensor. Detects stalled/collided disomes (pairs of ribosomes where the leading ribosome is stalled and a second ribosome has collided with it) and endonucleolytically cleaves mRNA at the 5' boundary of the stalled ribosome. Stalled/collided disomes form a new interface (primarily via the 30S subunits) that binds SmrB. Cleaved mRNA becomes available for tmRNA ligation, leading to ribosomal subunit dissociation and rescue of stalled ribosomes. The chain is Ribosome rescue factor SmrB from Shewanella putrefaciens (strain CN-32 / ATCC BAA-453).